The chain runs to 288 residues: UTP--glucose-1-phosphate uridylyltransferase (288 aa).

Belongs to the UDPGP type 2 family.

The enzyme catalyses alpha-D-glucose 1-phosphate + UTP + H(+) = UDP-alpha-D-glucose + diphosphate. It participates in glycolipid metabolism; diglucosyl-diacylglycerol biosynthesis. Functionally, catalyzes the formation of UDP-glucose from glucose-1-phosphate and UTP. This is an intermediate step in the biosynthesis of diglucosyl-diacylglycerol (Glc2-DAG), i.e. the predominant glycolipid found in the S.aureus membrane, which is also used as a membrane anchor for lipoteichoic acid (LTA). This Staphylococcus aureus (strain USA300) protein is UTP--glucose-1-phosphate uridylyltransferase (gtaB).